The following is a 326-amino-acid chain: Delta-aminolevulinic acid dehydratase (326 aa).

Zn(2+) is bound by residues Cys119, Cys121, and Cys129. Lys198 (schiff-base intermediate with substrate) is an active-site residue. 5-aminolevulinate is bound by residues Arg208 and Arg220. Glu236 is a Mg(2+) binding site. The active-site Schiff-base intermediate with substrate is Lys251. Residues Ser277 and Tyr316 each contribute to the 5-aminolevulinate site.

Belongs to the ALAD family. As to quaternary structure, homooctamer. Zn(2+) serves as cofactor.

The enzyme catalyses 2 5-aminolevulinate = porphobilinogen + 2 H2O + H(+). It functions in the pathway porphyrin-containing compound metabolism; protoporphyrin-IX biosynthesis; coproporphyrinogen-III from 5-aminolevulinate: step 1/4. Catalyzes an early step in the biosynthesis of tetrapyrroles. Binds two molecules of 5-aminolevulinate per subunit, each at a distinct site, and catalyzes their condensation to form porphobilinogen. This is Delta-aminolevulinic acid dehydratase (hemB) from Synechococcus elongatus (strain ATCC 33912 / PCC 7942 / FACHB-805) (Anacystis nidulans R2).